The primary structure comprises 216 residues: Adenylate kinase (216 aa).

10–15 is an ATP binding site; it reads GAGKGT. An NMP region spans residues 30–59; sequence STGDMLRAAVGVGTEVGKRAKAVMDAGKLV. AMP contacts are provided by residues Thr-31, Arg-36, 57-59, 85-88, and Gln-92; these read KLV and GFPR. Residues 126-163 are LID; it reads GRYTCAQCGTVYHDTDKVPVEEGVCDKCGSTHFKRRPD. Arg-127 is a binding site for ATP. Residues Cys-130 and Cys-133 each contribute to the Zn(2+) site. 136 to 137 is an ATP binding site; sequence VY. Cys-150 and Cys-153 together coordinate Zn(2+). AMP contacts are provided by Arg-160 and Arg-172. ATP is bound at residue Ala-200.

It belongs to the adenylate kinase family. In terms of assembly, monomer.

It is found in the cytoplasm. It carries out the reaction AMP + ATP = 2 ADP. The protein operates within purine metabolism; AMP biosynthesis via salvage pathway; AMP from ADP: step 1/1. Functionally, catalyzes the reversible transfer of the terminal phosphate group between ATP and AMP. Plays an important role in cellular energy homeostasis and in adenine nucleotide metabolism. In Rhizobium etli (strain CIAT 652), this protein is Adenylate kinase.